The sequence spans 400 residues: Enoyl-[acyl-carrier-protein] reductase [NADH] (400 aa).

NAD(+) contacts are provided by residues 48-53, 74-75, 111-112, and 139-140; these read GASTGY, FE, DA, and LA. Residue tyrosine 225 participates in substrate binding. Tyrosine 235 (proton donor) is an active-site residue. NAD(+)-binding positions include lysine 244 and 273–275; that span reads VVT.

This sequence belongs to the TER reductase family. As to quaternary structure, monomer.

The catalysed reaction is a 2,3-saturated acyl-[ACP] + NAD(+) = a (2E)-enoyl-[ACP] + NADH + H(+). The protein operates within lipid metabolism; fatty acid biosynthesis. Functionally, involved in the final reduction of the elongation cycle of fatty acid synthesis (FAS II). Catalyzes the reduction of a carbon-carbon double bond in an enoyl moiety that is covalently linked to an acyl carrier protein (ACP). The chain is Enoyl-[acyl-carrier-protein] reductase [NADH] from Burkholderia lata (strain ATCC 17760 / DSM 23089 / LMG 22485 / NCIMB 9086 / R18194 / 383).